Consider the following 262-residue polypeptide: Tryptophan synthase alpha chain (262 aa).

Residues Glu48 and Asp59 each act as proton acceptor in the active site.

Belongs to the TrpA family. As to quaternary structure, tetramer of two alpha and two beta chains.

The catalysed reaction is (1S,2R)-1-C-(indol-3-yl)glycerol 3-phosphate + L-serine = D-glyceraldehyde 3-phosphate + L-tryptophan + H2O. It participates in amino-acid biosynthesis; L-tryptophan biosynthesis; L-tryptophan from chorismate: step 5/5. Its function is as follows. The alpha subunit is responsible for the aldol cleavage of indoleglycerol phosphate to indole and glyceraldehyde 3-phosphate. The polypeptide is Tryptophan synthase alpha chain (Helicobacter pylori (strain ATCC 700392 / 26695) (Campylobacter pylori)).